The primary structure comprises 1030 residues: Toll-like receptor 9 (1030 aa).

A signal peptide spans 1–24 (MGPRCTLHPLSLLVQVTALAAALA). Residues 25-816 (QGRLPAFLPC…LCLDETLSWN (792 aa)) lie on the Extracellular side of the membrane. C34 and C44 form a disulfide bridge. 46–50 (WLFLK) contributes to the DNA binding site. LRR repeat units lie at residues 61-84 (RANV…DFVH), 86-109 (SSLR…HFPC), 121-146 (VPTL…SLVS), 149-165 (LSRT…LTGL), 166-189 (HALR…ALEV), 197-220 (LGNL…LPPS), 222-241 (ETLL…DLAN), 242-267 (LTAL…CREC), 282-305 (LSRL…WFRG), 307-331 (DRLQ…AFQG), 332-355 (LARL…HLHL), 362-385 (LRSL…TLQP), 389-412 (LPML…IFGA), 414-439 (PGLL…TREV), 469-493 (CKAF…MFAR), 495-518 (SRLE…QFVP), 519-542 (LTSL…SFTE), 544-571 (PRLE…SFVA), 573-597 (LPAL…LCSA), 599-621 (LCAL…LYLR), 626-649 (LRSL…ALDN), 651-674 (PKSL…SLTL), 675-698 (LPKL…SLPS), 700-722 (TQLR…FFAL), 723-746 (AKQL…WFGS), and 748-771 (VGNL…TFVG). Residue N63 is glycosylated (N-linked (GlcNAc...) asparagine). Residues 71–76 (SNRIHH) and 94–108 (KWNC…MHFP) contribute to the DNA site. C97 and C109 are joined by a disulfide. N128 carries N-linked (GlcNAc...) asparagine glycosylation. DNA-binding positions include Y131, R151, and 178–180 (YYK). C177 and C183 are oxidised to a cystine. N199 is a glycosylation site (N-linked (GlcNAc...) asparagine). Y207 contacts DNA. N-linked (GlcNAc...) asparagine glycosylation is found at N209 and N241. 2 disulfide bridges follow: C254/C267 and C257/C264. A lipid anchor (S-palmitoyl cysteine) is attached at C257. R261 serves as a coordination point for DNA. A lipid anchor (S-palmitoyl cysteine) is attached at C264. The N-linked (GlcNAc...) asparagine glycan is linked to N339. A disulfide bond links C469 and C499. An N-linked (GlcNAc...) asparagine glycan is attached at N512. N566 carries N-linked (GlcNAc...) asparagine glycosylation. N668 and N693 each carry an N-linked (GlcNAc...) asparagine glycan. N730 is a glycosylation site (N-linked (GlcNAc...) asparagine). Cystine bridges form between C763–C789 and C765–C808. Residues 817–837 (CFGISLLAMALGLVVPMLHHL) form a helical membrane-spanning segment. Topologically, residues 838-1030 (CGWDLWYCFH…NFCRGPTTAE (193 aa)) are cytoplasmic. One can recognise a TIR domain in the interval 865–1010 (LFYDAFVVFD…SFWAQLGTAL (146 aa)).

The protein belongs to the Toll-like receptor family. In terms of assembly, monomer and homodimer. Exists as a monomer in the absence of unmethylated cytidine-phosphate-guanosine (CpG) ligand. Proteolytic processing of an insertion loop (Z-loop) is required for homodimerization upon binding to the unmethylated CpG ligand leading to its activation. Interacts with MYD88 via their respective TIR domains. Interacts with BTK. Interacts (via transmembrane domain) with UNC93B1. Interacts with CD300LH; the interaction may promote full activation of TLR9-triggered innate responses. Interacts with CNPY3 and HSP90B1; this interaction is required for proper folding in the endoplasmic reticulum. Interacts with SMPDL3B. Interacts with CD82; this interaction is essential for TLR9-dependent myddosome formation in response to CpG stimulation. Post-translationally, activated by proteolytic cleavage of the flexible loop between repeats LRR14 and LRR15 within the ectodomain. Cleavage requires UNC93B1. Proteolytically processed by first removing the majority of the ectodomain by either asparagine endopeptidase (AEP) or a cathepsin followed by a trimming event that is solely cathepsin mediated and required for optimal receptor signaling. Palmitoylated by ZDHHC3 in the Golgi regulates TLR9 trafficking from the Golgi to endosomes. Depalmitoylation by PPT1 controls the release of TLR9 from UNC93B1 in endosomes.

Its subcellular location is the endoplasmic reticulum membrane. It is found in the endosome. The protein localises to the lysosome. The protein resides in the cytoplasmic vesicle. It localises to the phagosome. In terms of biological role, key component of innate and adaptive immunity. TLRs (Toll-like receptors) control host immune response against pathogens through recognition of molecular patterns specific to microorganisms. TLR9 is a nucleotide-sensing TLR which is activated by unmethylated cytidine-phosphate-guanosine (CpG) dinucleotides. Acts via MYD88 and TRAF6, leading to NF-kappa-B activation, cytokine secretion and the inflammatory response. Upon CpG stimulation, induces B-cell proliferation, activation, survival and antibody production. The chain is Toll-like receptor 9 (TLR9) from Sus scrofa (Pig).